The following is a 161-amino-acid chain: Type-1 angiotensin II receptor-associated protein (161 aa).

Over 1-26 (MELPAVNLKVILLVHWLLTTWGCLVF) the chain is Extracellular. Residues 27–47 (SSSYAWGNFTILALGVWAVAQ) form a helical membrane-spanning segment. The Cytoplasmic segment spans residues 48-53 (RDSIDA). Residues 54-74 (IGMFLGGLVATIFLDIIYISI) form a helical membrane-spanning segment. Residues 75 to 86 (FYSSVATGDTGR) lie on the Extracellular side of the membrane. A helical membrane pass occupies residues 87-107 (FGAGMAILSLLLKPFSCCLVY). Over 108–161 (HMHRERGGELPLRPDFFGPSQEHSAYQTIDSSSDAAADPFASLENKGQAVPRGY) the chain is Cytoplasmic. The segment at 110-122 (HRERGGELPLRPD) is interaction with AGTR1. Ser-127 is modified (phosphoserine). The residue at position 135 (Thr-135) is a Phosphothreonine. Position 138 is a phosphoserine (Ser-138).

Interacts with RACK1, and with the C-terminal region of AGTR1. As to expression, ubiquitous but more abundant in kidney, testis and heart.

The protein localises to the endoplasmic reticulum membrane. The protein resides in the golgi apparatus membrane. Its subcellular location is the cytoplasmic vesicle membrane. Appears to be a negative regulator of type-1 angiotensin II receptor-mediated signaling by regulating receptor internalization as well as mechanism of receptor desensitization such as phosphorylation. Also induces a decrease in angiotensin II-stimulated transcriptional activity. May play a role of negative regulator in cardiomyocyte hypertrophy induced by angiotensin II through an inhibition of p38 mitogen-activated protein kinase pathway. In Mus musculus (Mouse), this protein is Type-1 angiotensin II receptor-associated protein (Agtrap).